Here is a 168-residue protein sequence, read N- to C-terminus: MISHLSCITNSLPPTELLPWLNIEGSLTALLEVKAGRPLLVERRFEGYRLLSLAQKKQLGIKGAALSHPRLAWVREVYLYGNDELPWVQAQSLFPLSSLKGSARRLQQLKSTPIGYVLFNRSRTLPNQRSIKHTADGWQRQTLYDWHGRSLLISETFLPRFCEKQLDI.

Positions 75, 114, and 155 each coordinate substrate.

The protein belongs to the UbiC family.

The protein resides in the cytoplasm. It catalyses the reaction chorismate = 4-hydroxybenzoate + pyruvate. The protein operates within cofactor biosynthesis; ubiquinone biosynthesis. Its function is as follows. Removes the pyruvyl group from chorismate, with concomitant aromatization of the ring, to provide 4-hydroxybenzoate (4HB) for the ubiquinone pathway. This Psychrobacter cryohalolentis (strain ATCC BAA-1226 / DSM 17306 / VKM B-2378 / K5) protein is Probable chorismate pyruvate-lyase.